A 241-amino-acid chain; its full sequence is Large ribosomal subunit protein uL3 (241 aa).

2 disordered regions span residues 140-162 (SHRSIGSTGGRQDPGKTFKNKKM) and 217-241 (PLPGKFRENGASAPATEAPAAEETA). Glutamine 151 is subject to N5-methylglutamine. The segment covering 229-241 (APATEAPAAEETA) has biased composition (low complexity).

Belongs to the universal ribosomal protein uL3 family. In terms of assembly, part of the 50S ribosomal subunit. Forms a cluster with proteins L14 and L19. Methylated by PrmB.

One of the primary rRNA binding proteins, it binds directly near the 3'-end of the 23S rRNA, where it nucleates assembly of the 50S subunit. The protein is Large ribosomal subunit protein uL3 of Methylobacterium radiotolerans (strain ATCC 27329 / DSM 1819 / JCM 2831 / NBRC 15690 / NCIMB 10815 / 0-1).